Here is a 375-residue protein sequence, read N- to C-terminus: MSKTLALTEELIALSSVTPEDKGCQSRLIELLEPLGFVCETIESDGVTNLWARKGTTQPLLVFAGHTDVVPTGPLEQWTSPPFVPTQREGKLYGRGAADMKTSIAAMVVAAEEFVQAHPAHKGSIGFLITSDEEGPATDGTVIVCNALKARGEQLDYCVVGEPTSSDVLGDTIKNGRRGSMSGKLTVKGIQGHIAYPQLARNPIHQCAPALAELVAEKWDDGNEYYLPTSWQVSNIHGGAGASNVIPGNVVIDFNFRFCTASTVDGLQKRVHAILDKHGLEYDLKWSISGHPFLTPKGTLSDAMSDAIKSETGVTTELSTTGGTSDGRFIAQICPQVVEFGPPNGSIHKIDEHIEVRFIDPLKNIYRRTMENLLL.

Histidine 66 provides a ligand contact to Zn(2+). Aspartate 68 is a catalytic residue. Aspartate 99 lines the Zn(2+) pocket. Glutamate 133 functions as the Proton acceptor in the catalytic mechanism. Zn(2+) is bound by residues glutamate 134, glutamate 162, and histidine 348.

Belongs to the peptidase M20A family. DapE subfamily. Homodimer. Zn(2+) is required as a cofactor. The cofactor is Co(2+).

The catalysed reaction is N-succinyl-(2S,6S)-2,6-diaminopimelate + H2O = (2S,6S)-2,6-diaminopimelate + succinate. It participates in amino-acid biosynthesis; L-lysine biosynthesis via DAP pathway; LL-2,6-diaminopimelate from (S)-tetrahydrodipicolinate (succinylase route): step 3/3. Catalyzes the hydrolysis of N-succinyl-L,L-diaminopimelic acid (SDAP), forming succinate and LL-2,6-diaminopimelate (DAP), an intermediate involved in the bacterial biosynthesis of lysine and meso-diaminopimelic acid, an essential component of bacterial cell walls. The polypeptide is Succinyl-diaminopimelate desuccinylase (Janthinobacterium sp. (strain Marseille) (Minibacterium massiliensis)).